Here is a 148-residue protein sequence, read N- to C-terminus: Universal stress protein YxiE (148 aa).

An N-terminal signal peptide occupies residues 1–18; it reads MFNKMLVAIDGSDMSAKA.

It belongs to the universal stress protein A family.

This Bacillus subtilis (strain 168) protein is Universal stress protein YxiE (yxiE).